Here is a 284-residue protein sequence, read N- to C-terminus: Hypoxanthine-guanine phosphoribosyltransferase (284 aa).

GMP contacts are provided by residues Lys129, 194–202 (EDIIDTGKT), Lys226, and Asp253. Catalysis depends on Asp198, which acts as the Proton acceptor. Asp253 is a binding site for Mg(2+).

This sequence belongs to the purine/pyrimidine phosphoribosyltransferase family. Homotetramer. Requires Mg(2+) as cofactor.

It is found in the cytoplasm. It carries out the reaction IMP + diphosphate = hypoxanthine + 5-phospho-alpha-D-ribose 1-diphosphate. The catalysed reaction is GMP + diphosphate = guanine + 5-phospho-alpha-D-ribose 1-diphosphate. Its pathway is purine metabolism; IMP biosynthesis via salvage pathway; IMP from hypoxanthine: step 1/1. Converts guanine to guanosine monophosphate, and hypoxanthine to inosine monophosphate. Transfers the 5-phosphoribosyl group from 5-phosphoribosylpyrophosphate onto the purine. Plays a central role in the generation of purine nucleotides through the purine salvage pathway. In Schistosoma mansoni (Blood fluke), this protein is Hypoxanthine-guanine phosphoribosyltransferase (HGPRT).